The chain runs to 683 residues: MTIKEHKVVYEAHNVKALKAPQHFYNSQPGKGYVTDMQHYQEMYQQSINEPEKFFDKMAKEYLHWDAPYTKVQSGSLNNGDVAWFLNGKLNASYNCVDRHAFANPDKPALIYEADDESDNKIITFGELLRKVSQIAGVLKSWGVKKGDTVAIYLPMIPEAVIAMLAVARIGAIHSVVFAGFSAGSLKDRVVDANSKVVITCDEGKRGGKTINTKKIVDEGLNGVDLVSRILVFQRTGTEGIPMKAGRDYWWHEEAAKQRTYLPPVSCDAEDPLFLLYTSGSTGSPKGVVHTTGGYLLGAALTTRYVFDIHPEDVLFTAGDVGWITGHTYALYGPLTLGTASIIFESTPAYPDYGRYWRIIQRHKATHFYVAPTALRLIKRVGEAEIAKYDTSSLRVLGSVGEPISPDLWEWYHEKVGNKNCVICDTMWQTESGSHLIAPLAGAVPTKPGSATVPFFGINACIIDPVTGVELEGNDVEGVLAVKSPWPSMARSVWNHHDRYMDTYLKPYPGHYFTGDGAGRDHDGYYWIRGRVDDVVNVSGHRLSTSEIEASISNHENVSEAAVVGIPDELTGQTVVAYVSLKDGYLQNNATEGDAEHITPDNLRRELILQVRGEIGPFASPKTIILVRDLPRTRSGKIMRRVLRKVASNEAEQLGDLTTLANPEVVPAIISAVENQFFSQKKK.

CoA contacts are provided by residues 206-209 (RGGK) and threonine 325. Residues 401–403 (GEP) and 425–430 (DTMWQT) each bind ATP. 425-430 (DTMWQT) provides a ligand contact to AMP. Residue lysine 506 forms a Glycyl lysine isopeptide (Lys-Gly) (interchain with G-Cter in ubiquitin) linkage. Residues aspartate 516 and arginine 531 each contribute to the ATP site. Positions 516 and 531 each coordinate AMP. Residue serine 539 coordinates CoA. Arginine 542 is an ATP binding site. Position 612 (arginine 612) interacts with CoA. Residue serine 679 is modified to Phosphoserine.

This sequence belongs to the ATP-dependent AMP-binding enzyme family.

The protein localises to the cytoplasm. It localises to the nucleus. The enzyme catalyses acetate + ATP + CoA = acetyl-CoA + AMP + diphosphate. The protein operates within carbohydrate metabolism; pyruvate metabolism. Its function is as follows. Catalyzes the production of acetyl-CoA. Provides the acetyl-CoA source for histone acetylation in the nucleus. 'Anaerobic' isozyme of acetyl-coenzyme A synthetase, which is required for growth on fermentable carbon sources such as glucose. May be involved in the PDH (pyruvate dehydrogenase complex) bypass. The chain is Acetyl-coenzyme A synthetase 2 from Saccharomyces cerevisiae (strain ATCC 204508 / S288c) (Baker's yeast).